Here is a 1026-residue protein sequence, read N- to C-terminus: MRFFALFIYRPVATILIAAAITLCGILGFRLLPVAPLPQVDFPVIMVSASLPGASPETMASSVATPLERSLGRIAGVNEMTSSSSLGSTRIILEFNFDRDINGAARDVQAAINAAQSLLPSGMPSRPTYRKANPSDAPIMILTLTSESWSQGKLYDFASTQLAQTIAQIDGVGDVDVGGSSLPAVRVGLNPQALFNQGVSLDEVREAIDSANVRRPQGAIEDSVHRWQIQTNDELKTAAEYQPLIIHYNNGAAVRLGDVASVTDSVQDVRNAGMTNAKPAILLMIRKLPEANIIQTVDGIRAKLPELRAMIPAAIDLQIAQDRSPTIRASLQEVEETLAISVALVILVVFLFLRSGRATLIPAVAVPVSLIGTFAAMYLCGFSLNNLSLMALTIATGFVVDDAIVVLENIARHLEAGMKPLQAALQGTREVGFTVISMSLSLVAVFLPLLLMGGLPGRLLREFAVTLSVAIGISLVVSLTLTPMMCGWMLKSSKPRTQPRKRGVGRLLVALQQGYGTSLKWVLNHTRLVGVVFLGTVALNIWLYIAIPKTFFPEQDTGVLMGGIQADQSISFQAMRGKLQDFMKIIRDDPAVNNVTGFTGGSRVNSGMMFITLKPRGERKETAQQIIDRLRVKLAKEPGARLFLMAVQDIRVGGRQANASYQYTLLSDSLAALREWEPKIRKALSALPQLADVNSDQQDNGAEMNLIYDRDTMSRLGIDVQAANSLLNNAFGQRQISTIYQPMNQYKVVMEVDPRYSQDISALEKMFVINRDGKAIPLSYFAQWRPANAPLSVNHQGLSAASTIAFNLPTGTSLSQATEAINRTMTQLGVPSTVRGSFSGTAQVFQQTMNSQLILIVAAIATVYIVLGILYESYVHPLTILSTLPSAGVGALLALELFNAPFSLIALIGIMLLIGIVKKNAIMMVDFALEAQRSGGLTPEQAIFQACLLRFRPIMMTTLAALFGALPLVLSGGDGSELRQPLGITIVGGLVMSQLLTLYTTPVVYLFFDRLRLRFSRKNSKPVVEI.

11 consecutive transmembrane segments (helical) span residues 15-35, 333-353, 360-380, 387-407, 431-451, 463-483, 528-548, 853-873, 897-917, 953-973, and 984-1004; these read ILIAAAITLCGILGFRLLPVA, EVEETLAISVALVILVVFLFL, LIPAVAVPVSLIGTFAAMYLC, LSLMALTIATGFVVDDAIVVL, VGFTVISMSLSLVAVFLPLLL, FAVTLSVAIGISLVVSLTLTP, LVGVVFLGTVALNIWLYIAIP, LILIVAAIATVYIVLGILYES, LFNAPFSLIALIGIMLLIGIV, PIMMTTLAALFGALPLVLSGG, and ITIVGGLVMSQLLTLYTTPVV.

The protein belongs to the resistance-nodulation-cell division (RND) (TC 2.A.6) family. MdtC subfamily. As to quaternary structure, part of a tripartite efflux system composed of MdtA, MdtB and MdtC. MdtC forms a heteromultimer with MdtB.

It is found in the cell inner membrane. In Salmonella newport (strain SL254), this protein is Multidrug resistance protein MdtC.